A 104-amino-acid chain; its full sequence is Protein U9 (104 aa).

Residues 37–54 (GVQGLNADCSYVKSQCIK) traverse the membrane as a helical segment.

It is found in the host membrane. The sequence is that of Protein U9 (U9) from Human herpesvirus 6B (HHV-6 variant B).